The primary structure comprises 1776 residues: Signal-induced proliferation-associated 1-like protein 3 (1776 aa).

2 disordered regions span residues 41–157 (AQNG…GRAF) and 240–325 (PGAL…EASR). A compositionally biased stretch (low complexity) spans 54 to 69 (PAATTTRPSPTTPAMP). Composition is skewed to polar residues over residues 89–99 (EQSNPSPSQDT) and 112–129 (RNLQNGQLPSSTPASSGS). A Phosphoserine modification is found at Ser-94. Residues 131 to 140 (AFHRLSRRRS) show a composition bias toward basic residues. Ser-140 carries the phosphoserine modification. A compositionally biased stretch (polar residues) spans 257–268 (GQPTKDSLQSLQ). Ser-394 carries the phosphoserine modification. The tract at residues 438 to 461 (SRASVGSPGGSSEAHMAEPTLSTH) is disordered. The region spanning 605 to 822 (LLKLDEQGLC…RTRQEYLKDL (218 aa)) is the Rap-GAP domain. The PDZ domain maps to 960 to 1024 (DMTLRRNGLG…DQMIDLLRTS (65 aa)). 3 disordered regions span residues 1040 to 1104 (PRRG…AQSL), 1117 to 1164 (RESQ…ATYA), and 1184 to 1632 (DPHF…LDPG). 2 stretches are compositionally biased toward polar residues: residues 1074–1104 (APWQWSGPASHNSLPATKWTTPATPGHAQSL) and 1151–1160 (PSGSFSTPGS). The segment covering 1190–1201 (DGMSSGDSSSGG) has biased composition (low complexity). Residues 1239–1255 (SRQDAAGKDSPNRHSKG) show a composition bias toward basic and acidic residues. The segment covering 1260 to 1275 (SSHSSSNTLSSNASSS) has biased composition (low complexity). Residues 1298–1316 (GGSSDSGIDTTLYTSSPSC) show a composition bias toward polar residues. Basic and acidic residues predominate over residues 1344–1357 (SAGRPHPVDRRREV). The residue at position 1358 (Ser-1358) is a Phosphoserine. The residue at position 1381 (Thr-1381) is a Phosphothreonine. Residues 1409–1436 (VYKTASAETPRPSQLSQCSPFQLSTSVP) show a composition bias toward polar residues. Residue Lys-1442 is modified to N6-acetyllysine. A compositionally biased stretch (basic and acidic residues) spans 1503-1512 (TIEDDLKKLI). 2 stretches are compositionally biased toward polar residues: residues 1526-1541 (GQSPQKSLQRTLSDES) and 1566-1578 (LFTSTCTFPSSTL). A phosphoserine mark is found at Ser-1538 and Ser-1541. The segment covering 1589–1601 (PPSGAPSTTPATG) has biased composition (low complexity). A phosphoserine mark is found at Ser-1614 and Ser-1617. Over residues 1620–1630 (DGRDRPLRRLD) the composition is skewed to basic and acidic residues. The residue at position 1672 (Ser-1672) is a Phosphoserine. The segment at 1678–1705 (AHSPVHSHLSLERGPQTPRATPTMSEES) is disordered. Phosphothreonine is present on residues Thr-1694 and Thr-1698. The stretch at 1715–1769 (QLEVMLKQLHTDLQKEKQDKVVLQSEVASLRQNNQRLQEESQAASEQLRKFAELF) forms a coiled coil.

It localises to the apical cell membrane. Plays a critical role in epithelial cell morphogenesis, polarity, adhesion and cytoskeletal organization in the lens. The protein is Signal-induced proliferation-associated 1-like protein 3 (Sipa1l3) of Mus musculus (Mouse).